Consider the following 474-residue polypeptide: UDP-glycosyltransferase 71C2 (474 aa).

UDP-alpha-D-glucose contacts are provided by residues serine 293, 352 to 354 (APQ), 369 to 377 (HCGWNSILE), and 391 to 394 (YAEQ).

The protein belongs to the UDP-glycosyltransferase family.

Functionally, possesses low quercetin 3-O-glucosyltransferase, 7-O-glucosyltransferase and 3'-O-glucosyltransferase activities in vitro. Glucosylates other secondary metabolites in vitro like vanillin, trans-resveratrol, curumin and etoposide. The polypeptide is UDP-glycosyltransferase 71C2 (UGT71C2) (Arabidopsis thaliana (Mouse-ear cress)).